Consider the following 71-residue polypeptide: uncharacterized protein (71 aa).

The first 23 residues, methionine 1–leucine 23, serve as a signal peptide directing secretion. Asparagine 20, asparagine 28, asparagine 44, and asparagine 50 each carry an N-linked (GlcNAc...) asparagine glycan.

The protein localises to the secreted. This is an uncharacterized protein from Dictyostelium discoideum (Social amoeba).